The following is a 371-amino-acid chain: Dual-specificity RNA methyltransferase RlmN (371 aa).

Glu86 (proton acceptor) is an active-site residue. A Radical SAM core domain is found at 105–338 (RHARYTICVS…CTIRQSKGLD (234 aa)). A disulfide bridge links Cys112 with Cys343. [4Fe-4S] cluster contacts are provided by Cys119, Cys123, and Cys126. S-adenosyl-L-methionine contacts are provided by residues 169–170 (GE), Ser201, 224–226 (SLH), and Asn300. The active-site S-methylcysteine intermediate is the Cys343. Residues 348–363 (QRSQNLSPSNNNTSKP) show a composition bias toward polar residues. The tract at residues 348 to 371 (QRSQNLSPSNNNTSKPSDIKKSES) is disordered.

The protein belongs to the radical SAM superfamily. RlmN family. [4Fe-4S] cluster serves as cofactor.

It localises to the cytoplasm. The catalysed reaction is adenosine(2503) in 23S rRNA + 2 reduced [2Fe-2S]-[ferredoxin] + 2 S-adenosyl-L-methionine = 2-methyladenosine(2503) in 23S rRNA + 5'-deoxyadenosine + L-methionine + 2 oxidized [2Fe-2S]-[ferredoxin] + S-adenosyl-L-homocysteine. The enzyme catalyses adenosine(37) in tRNA + 2 reduced [2Fe-2S]-[ferredoxin] + 2 S-adenosyl-L-methionine = 2-methyladenosine(37) in tRNA + 5'-deoxyadenosine + L-methionine + 2 oxidized [2Fe-2S]-[ferredoxin] + S-adenosyl-L-homocysteine. Its function is as follows. Specifically methylates position 2 of adenine 2503 in 23S rRNA and position 2 of adenine 37 in tRNAs. m2A2503 modification seems to play a crucial role in the proofreading step occurring at the peptidyl transferase center and thus would serve to optimize ribosomal fidelity. In Campylobacter curvus (strain 525.92), this protein is Dual-specificity RNA methyltransferase RlmN.